The primary structure comprises 425 residues: uncharacterized protein (425 aa).

In terms of domain architecture, TRAM spans 1–57 (MKDKPLKLTVEKLVYGGYGFSRLNGKAVFVRFASPKELVEAKVVKEKKDYTEAVVTK). Positions 70, 76, 79, and 153 each coordinate [4Fe-4S] cluster. Positions 260, 308, and 354 each coordinate S-adenosyl-L-methionine. Cys-381 acts as the Nucleophile in catalysis.

Belongs to the class I-like SAM-binding methyltransferase superfamily. RNA M5U methyltransferase family.

This is an uncharacterized protein from Aquifex aeolicus (strain VF5).